Here is a 92-residue protein sequence, read N- to C-terminus: Small ribosomal subunit protein uS15 (92 aa).

This sequence belongs to the universal ribosomal protein uS15 family. As to quaternary structure, part of the 30S ribosomal subunit. Forms a bridge to the 50S subunit in the 70S ribosome, contacting the 23S rRNA.

One of the primary rRNA binding proteins, it binds directly to 16S rRNA where it helps nucleate assembly of the platform of the 30S subunit by binding and bridging several RNA helices of the 16S rRNA. Its function is as follows. Forms an intersubunit bridge (bridge B4) with the 23S rRNA of the 50S subunit in the ribosome. This is Small ribosomal subunit protein uS15 from Symbiobacterium thermophilum (strain DSM 24528 / JCM 14929 / IAM 14863 / T).